Reading from the N-terminus, the 37-residue chain is Large ribosomal subunit protein bL36 (37 aa).

It belongs to the bacterial ribosomal protein bL36 family.

In Pasteurella multocida (strain Pm70), this protein is Large ribosomal subunit protein bL36.